The primary structure comprises 64 residues: Conotoxin Vc1.3 (64 aa).

Residues 1-21 (MGMRMMFTVFLLVVLATTVVS) form the signal peptide. A propeptide spanning residues 22–43 (FTSDRASDGRKAAASDLITLTI) is cleaved from the precursor. Cystine bridges form between Cys46–Cys52 and Cys47–Cys60. Cys60 bears the Cysteine amide mark.

It belongs to the conotoxin A superfamily. In terms of tissue distribution, expressed by the venom duct.

Its subcellular location is the secreted. Its function is as follows. May act as a toxin. This Conus victoriae (Queen Victoria cone) protein is Conotoxin Vc1.3.